The following is a 637-amino-acid chain: GTP-binding protein 4 (637 aa).

Ala-2 bears the N-acetylalanine mark. Position 103 is an N6-acetyllysine; alternate (Lys-103). Residue Lys-103 forms a Glycyl lysine isopeptide (Lys-Gly) (interchain with G-Cter in SUMO2); alternate linkage. The residue at position 122 (Ser-122) is a Phosphoserine. The OBG-type G domain occupies 169–340; it reads RTLLLCGYPN…VKTEACDRLL (172 aa). Residues 175–182, 221–225, and 289–292 each bind GTP; these read GYPNVGKS, DTPGI, and SKCE. Lys-332 participates in a covalent cross-link: Glycyl lysine isopeptide (Lys-Gly) (interchain with G-Cter in SUMO2). Disordered regions lie at residues 499 to 518 and 525 to 637; these read SKEK…KVQR and MRSL…KERR. Lys-535 participates in a covalent cross-link: Glycyl lysine isopeptide (Lys-Gly) (interchain with G-Cter in SUMO2). A compositionally biased stretch (basic residues) spans 542–555; that stretch reads VRARRSRSVTRKRK. The residue at position 559 (Ser-559) is a Phosphoserine. A compositionally biased stretch (low complexity) spans 563–574; it reads SSIARSRSRSCS. Residues 576–588 show a composition bias toward basic and acidic residues; the sequence is TPRDVSGLRDVKM. The span at 589 to 607 shows a compositional bias: basic residues; sequence VKKAKTMMKKAQKKMNRLG. Over residues 608–621 the composition is skewed to basic and acidic residues; it reads KKGEADRHVFDMKP. The span at 622–637 shows a compositional bias: basic residues; that stretch reads KHLLSGKRKAGKKERR.

The protein belongs to the TRAFAC class OBG-HflX-like GTPase superfamily. OBG GTPase family. NOG subfamily. In terms of assembly, associates with pre-60S ribosomal particles. Interacts with MINAS-60 (product of an alternative open reading frame of RBM10).

The protein resides in the nucleus. It is found in the nucleolus. In terms of biological role, involved in the biogenesis of the 60S ribosomal subunit. Acts as TP53 repressor, preventing TP53 stabilization and cell cycle arrest. The sequence is that of GTP-binding protein 4 (Gtpbp4) from Rattus norvegicus (Rat).